Reading from the N-terminus, the 145-residue chain is Large ribosomal subunit protein uL15 (145 aa).

The tract at residues 1-58 (MFSLLKPKGAAKRRKIVGRGPGSGLGKTSGRGQKGQKARNTSPRLGFEGGQTPLYRRL) is disordered. Residues 19-33 (RGPGSGLGKTSGRGQ) show a composition bias toward gly residues.

The protein belongs to the universal ribosomal protein uL15 family. Part of the 50S ribosomal subunit.

Functionally, binds to the 23S rRNA. This chain is Large ribosomal subunit protein uL15, found in Borreliella afzelii (strain PKo) (Borrelia afzelii).